Consider the following 88-residue polypeptide: Large ribosomal subunit protein bL31B (88 aa).

This sequence belongs to the bacterial ribosomal protein bL31 family. Type B subfamily. As to quaternary structure, part of the 50S ribosomal subunit.

This is Large ribosomal subunit protein bL31B from Bordetella bronchiseptica (strain ATCC BAA-588 / NCTC 13252 / RB50) (Alcaligenes bronchisepticus).